A 226-amino-acid polypeptide reads, in one-letter code: ATP synthase F(0) complex subunit a (226 aa).

A run of 6 helical transmembrane segments spans residues 6–26 (FAPF…IMIF), 68–88 (WTLM…LGLL), 97–117 (QLSM…LMGF), 138–158 (IPML…ALAV), 164–184 (ITAG…LSSI), and 193–213 (FTIL…QAYV).

The protein belongs to the ATPase A chain family. As to quaternary structure, component of the ATP synthase complex composed at least of ATP5F1A/subunit alpha, ATP5F1B/subunit beta, ATP5MC1/subunit c (homooctomer), MT-ATP6/subunit a, MT-ATP8/subunit 8, ATP5ME/subunit e, ATP5MF/subunit f, ATP5MG/subunit g, ATP5MK/subunit k, ATP5MJ/subunit j, ATP5F1C/subunit gamma, ATP5F1D/subunit delta, ATP5F1E/subunit epsilon, ATP5PF/subunit F6, ATP5PB/subunit b, ATP5PD/subunit d, ATP5PO/subunit OSCP. ATP synthase complex consists of a soluble F(1) head domain (subunits alpha(3) and beta(3)) - the catalytic core - and a membrane F(0) domain - the membrane proton channel (subunits c, a, 8, e, f, g, k and j). These two domains are linked by a central stalk (subunits gamma, delta, and epsilon) rotating inside the F1 region and a stationary peripheral stalk (subunits F6, b, d, and OSCP). Interacts with DNAJC30; interaction is direct.

Its subcellular location is the mitochondrion inner membrane. It catalyses the reaction H(+)(in) = H(+)(out). Functionally, subunit a, of the mitochondrial membrane ATP synthase complex (F(1)F(0) ATP synthase or Complex V) that produces ATP from ADP in the presence of a proton gradient across the membrane which is generated by electron transport complexes of the respiratory chain. ATP synthase complex consist of a soluble F(1) head domain - the catalytic core - and a membrane F(1) domain - the membrane proton channel. These two domains are linked by a central stalk rotating inside the F(1) region and a stationary peripheral stalk. During catalysis, ATP synthesis in the catalytic domain of F(1) is coupled via a rotary mechanism of the central stalk subunits to proton translocation. With the subunit c (ATP5MC1), forms the proton-conducting channel in the F(0) domain, that contains two crucial half-channels (inlet and outlet) that facilitate proton movement from the mitochondrial intermembrane space (IMS) into the matrix. Protons are taken up via the inlet half-channel and released through the outlet half-channel, following a Grotthuss mechanism. In Ornithorhynchus anatinus (Duckbill platypus), this protein is ATP synthase F(0) complex subunit a.